The primary structure comprises 296 residues: Acetylglutamate kinase (296 aa).

Substrate is bound by residues 65–66 (GG), Arg87, and Asn190.

This sequence belongs to the acetylglutamate kinase family. ArgB subfamily.

Its subcellular location is the cytoplasm. The catalysed reaction is N-acetyl-L-glutamate + ATP = N-acetyl-L-glutamyl 5-phosphate + ADP. The protein operates within amino-acid biosynthesis; L-arginine biosynthesis; N(2)-acetyl-L-ornithine from L-glutamate: step 2/4. Catalyzes the ATP-dependent phosphorylation of N-acetyl-L-glutamate. This Moorella thermoacetica (strain ATCC 39073 / JCM 9320) protein is Acetylglutamate kinase.